A 563-amino-acid chain; its full sequence is MDYKNLVAERIKENTELEVDLIEKLIEIPPKKEMGDYAFPCFQLAKTFRKAPNLIAEELKEKINKEGFEKVVTVGPYLNFFVDKTILIKDVLEKVLSEKEKYGSSKVGEGKNVVVEYSSPNIAKPFHIGHLFTTAIGNALYKILSFEGYNCIGINHLGDWGTQFGKLISAYRRWVDEEALEKDAIGELLRIYVKFHGEAEKDPELEKEARLNFKRLEEGSEEETELWNRFKDLSLKEFNKVYDMLGIKFDSLAGESFYSDKMDAVVQEIDDKGLLVDSNGAKVVMLDEYNMPPCMIKKSDGATIYATRDLAAAIYRKKTYDFHKCIYVVGTPQALHFKQVFTTLKLMGHDWADDCKHVGFGLVKLANKKLSTRNGDVVFLEDLLNQSVEETLKIINEKNPNLKNKGDVAKKLGIGAVVFTYLKNNRERDIVFDWKEILSFDGETGPYVEYSYARGKSILRKAGELTGEADYSKLSSKEEFELAKLLGGFNDAIMNAIDKLEPAMVTRYVIEVAKAFNKFYNAHGILNAEDNDVKLARVKLVEATCQVIKNALNLLGIDVVEEM.

The 'HIGH' region motif lies at 120–130 (PNIAKPFHIGH).

Belongs to the class-I aminoacyl-tRNA synthetase family. As to quaternary structure, monomer.

It is found in the cytoplasm. The catalysed reaction is tRNA(Arg) + L-arginine + ATP = L-arginyl-tRNA(Arg) + AMP + diphosphate. In Clostridium botulinum (strain ATCC 19397 / Type A), this protein is Arginine--tRNA ligase.